The following is a 273-amino-acid chain: Putative phosphoenolpyruvate synthase regulatory protein (273 aa).

153 to 160 (AVSRAGKT) serves as a coordination point for ADP.

The protein belongs to the pyruvate, phosphate/water dikinase regulatory protein family. PSRP subfamily.

The catalysed reaction is [pyruvate, water dikinase] + ADP = [pyruvate, water dikinase]-phosphate + AMP + H(+). It carries out the reaction [pyruvate, water dikinase]-phosphate + phosphate + H(+) = [pyruvate, water dikinase] + diphosphate. Its function is as follows. Bifunctional serine/threonine kinase and phosphorylase involved in the regulation of the phosphoenolpyruvate synthase (PEPS) by catalyzing its phosphorylation/dephosphorylation. The chain is Putative phosphoenolpyruvate synthase regulatory protein from Xylella fastidiosa (strain 9a5c).